Consider the following 84-residue polypeptide: UPF0473 protein CKL_1327 (84 aa).

The protein belongs to the UPF0473 family.

This is UPF0473 protein CKL_1327 from Clostridium kluyveri (strain ATCC 8527 / DSM 555 / NBRC 12016 / NCIMB 10680 / K1).